The following is a 442-amino-acid chain: Tyrosine--tRNA ligase (442 aa).

Tyrosine 55 contacts L-tyrosine. The short motif at 60–69 (PTAPSLHLGN) is the 'HIGH' region element. Residues tyrosine 190 and glutamine 194 each contribute to the L-tyrosine site. The 'KMSKS' region signature appears at 250-254 (KFGKS). Lysine 253 is a binding site for ATP. The S4 RNA-binding domain maps to 373-438 (VAIAQALVDT…GKKTLAGVFV (66 aa)).

Belongs to the class-I aminoacyl-tRNA synthetase family. TyrS type 1 subfamily. In terms of assembly, homodimer.

Its subcellular location is the cytoplasm. The enzyme catalyses tRNA(Tyr) + L-tyrosine + ATP = L-tyrosyl-tRNA(Tyr) + AMP + diphosphate + H(+). Its function is as follows. Catalyzes the attachment of tyrosine to tRNA(Tyr) in a two-step reaction: tyrosine is first activated by ATP to form Tyr-AMP and then transferred to the acceptor end of tRNA(Tyr). The protein is Tyrosine--tRNA ligase of Leifsonia xyli subsp. xyli (strain CTCB07).